Consider the following 264-residue polypeptide: Thiazole synthase (264 aa).

Catalysis depends on K106, which acts as the Schiff-base intermediate with DXP. Residues G167, 193 to 194 (AG), and 215 to 216 (NS) each bind 1-deoxy-D-xylulose 5-phosphate.

It belongs to the ThiG family. As to quaternary structure, homotetramer. Forms heterodimers with either ThiH or ThiS.

Its subcellular location is the cytoplasm. The enzyme catalyses [ThiS sulfur-carrier protein]-C-terminal-Gly-aminoethanethioate + 2-iminoacetate + 1-deoxy-D-xylulose 5-phosphate = [ThiS sulfur-carrier protein]-C-terminal Gly-Gly + 2-[(2R,5Z)-2-carboxy-4-methylthiazol-5(2H)-ylidene]ethyl phosphate + 2 H2O + H(+). It participates in cofactor biosynthesis; thiamine diphosphate biosynthesis. Its function is as follows. Catalyzes the rearrangement of 1-deoxy-D-xylulose 5-phosphate (DXP) to produce the thiazole phosphate moiety of thiamine. Sulfur is provided by the thiocarboxylate moiety of the carrier protein ThiS. In vitro, sulfur can be provided by H(2)S. The chain is Thiazole synthase from Prochlorococcus marinus (strain MIT 9215).